We begin with the raw amino-acid sequence, 147 residues long: 3-dehydroquinate dehydratase 1 (147 aa).

Tyrosine 23 serves as the catalytic Proton acceptor. Substrate contacts are provided by asparagine 75, histidine 81, and aspartate 88. Residue histidine 101 is the Proton donor of the active site. Residues 102–103 and arginine 112 each bind substrate; that span reads LS.

This sequence belongs to the type-II 3-dehydroquinase family. Homododecamer.

The enzyme catalyses 3-dehydroquinate = 3-dehydroshikimate + H2O. It participates in metabolic intermediate biosynthesis; chorismate biosynthesis; chorismate from D-erythrose 4-phosphate and phosphoenolpyruvate: step 3/7. In terms of biological role, catalyzes a trans-dehydration via an enolate intermediate. The sequence is that of 3-dehydroquinate dehydratase 1 (aroQ1) from Pseudomonas aeruginosa (strain ATCC 15692 / DSM 22644 / CIP 104116 / JCM 14847 / LMG 12228 / 1C / PRS 101 / PAO1).